Consider the following 264-residue polypeptide: NADH dehydrogenase [ubiquinone] iron-sulfur protein 3, mitochondrial (264 aa).

The transit peptide at 1–36 (MAAAAVARLWWRGILGASALTRGTGRPSVLLLPVRR) directs the protein to the mitochondrion.

The protein belongs to the complex I 30 kDa subunit family. In terms of assembly, core subunit of respiratory chain NADH dehydrogenase (Complex I) which is composed of 45 different subunits. Interacts with NDUFAF3. Interacts with RAB5IF. Found in subcomplexes containing subunits NDUFS2, MT-ND1 and NDUFA13.

The protein localises to the mitochondrion inner membrane. It catalyses the reaction a ubiquinone + NADH + 5 H(+)(in) = a ubiquinol + NAD(+) + 4 H(+)(out). Functionally, core subunit of the mitochondrial membrane respiratory chain NADH dehydrogenase (Complex I) which catalyzes electron transfer from NADH through the respiratory chain, using ubiquinone as an electron acceptor. Essential for the catalytic activity and assembly of complex I. The polypeptide is NADH dehydrogenase [ubiquinone] iron-sulfur protein 3, mitochondrial (NDUFS3) (Pan troglodytes (Chimpanzee)).